Reading from the N-terminus, the 126-residue chain is uncharacterized protein (126 aa).

The VOC domain occupies 4-126 (RIDHTGIMVR…DGEWIEFFQR (123 aa)). A divalent metal cation is bound by residues histidine 7, glutamate 42, histidine 74, and glutamate 122.

Belongs to the glyoxalase I family.

This is an uncharacterized protein from Bacillus subtilis (strain 168).